Here is a 312-residue protein sequence, read N- to C-terminus: Very-long-chain 3-oxoacyl-CoA reductase (312 aa).

A helical transmembrane segment spans residues Ala-4 to Leu-24. Gly-50–Leu-79 lines the NADP(+) pocket. Transmembrane regions (helical) follow at residues Gly-182–Tyr-202 and Gly-271–Phe-291. Ser-189 contacts substrate. The active-site Proton acceptor is Tyr-202. Positions Lys-308–Asn-312 match the Di-lysine motif motif.

It belongs to the short-chain dehydrogenases/reductases (SDR) family. 17-beta-HSD 3 subfamily.

The protein localises to the endoplasmic reticulum membrane. The enzyme catalyses a very-long-chain (3R)-3-hydroxyacyl-CoA + NADP(+) = a very-long-chain 3-oxoacyl-CoA + NADPH + H(+). The catalysed reaction is 17beta-estradiol + NAD(+) = estrone + NADH + H(+). It catalyses the reaction 17beta-estradiol + NADP(+) = estrone + NADPH + H(+). It carries out the reaction 3-oxooctadecanoyl-CoA + NADPH + H(+) = (3R)-hydroxyoctadecanoyl-CoA + NADP(+). The enzyme catalyses (7Z,10Z,13Z,16Z)-3-oxodocosatetraenoyl-CoA + NADPH + H(+) = (3R)-hydroxy-(7Z,10Z,13Z,16Z)-docosatetraenoyl-CoA + NADP(+). The catalysed reaction is 3-oxo-(7Z,10Z,13Z,16Z,19Z)-docosapentaenoyl-CoA + NADPH + H(+) = (3R)-hydroxy-(7Z,10Z,13Z,16Z,19Z)-docosapentaenoyl-CoA + NADP(+). It catalyses the reaction (8Z,11Z,14Z)-3-oxoeicosatrienoyl-CoA + NADPH + H(+) = (3R)-hydroxy-(8Z,11Z,14Z)-eicosatrienoyl-CoA + NADP(+). The protein operates within lipid metabolism; fatty acid biosynthesis. It functions in the pathway steroid biosynthesis; estrogen biosynthesis. Its function is as follows. Catalyzes the second of the four reactions of the long-chain fatty acids elongation cycle. This endoplasmic reticulum-bound enzymatic process, allows the addition of two carbons to the chain of long- and very long-chain fatty acids/VLCFAs per cycle. This enzyme has a 3-ketoacyl-CoA reductase activity, reducing 3-ketoacyl-CoA to 3-hydroxyacyl-CoA, within each cycle of fatty acid elongation. Thereby, it may participate in the production of VLCFAs of different chain lengths that are involved in multiple biological processes as precursors of membrane lipids and lipid mediators. May also catalyze the transformation of estrone (E1) into estradiol (E2) and play a role in estrogen formation. The protein is Very-long-chain 3-oxoacyl-CoA reductase (HSD17B12) of Bos taurus (Bovine).